The primary structure comprises 340 residues: Sodium/bile acid cotransporter 7 (340 aa).

Residues 1 to 10 (MRLLERVRKE) lie on the Cytoplasmic side of the membrane. Residues 11–31 (WFMVGIVVAIGAAKLEPSVGV) traverse the membrane as a helical segment. Residues 32-37 (NGGPLK) lie on the Extracellular side of the membrane. The helical transmembrane segment at 38–58 (PEITVSYIAVATIFFNSGLSL) threads the bilayer. At 59–71 (KTEELTSALVHLK) the chain is on the cytoplasmic side. The helical transmembrane segment at 72–92 (LHLFIQVFTLAFFPTTIWLFL) threads the bilayer. Topologically, residues 93 to 116 (QLLSVTSINEWLLKGLQTVGCMPP) are extracellular. The helical transmembrane segment at 117–137 (PVSSAVILTKAVGGNEAAAIF) threads the bilayer. A topological domain (cytoplasmic) is located at residue N138. A helical transmembrane segment spans residues 139–159 (SAFGSFLGIVVTPVLLLLFLG). At 160–163 (SSSS) the chain is on the extracellular side. A helical transmembrane segment spans residues 164 to 184 (VPFTSIFSQLFMTVVVPLVIG). At 185–201 (QIVRRYIKDWLERKKPP) the chain is on the cytoplasmic side. Residues 202-222 (FGVVSSSVLLMIIYTTFCDTF) form a helical membrane-spanning segment. The Extracellular segment spans residues 223–234 (SNPNIDLDKFSL). Residues 235–255 (ILILFIIVSIQLSFMLLTFVF) traverse the membrane as a helical segment. Residues 256 to 270 (STRNNSGFTPADTVA) are Cytoplasmic-facing. The chain crosses the membrane as a helical span at residues 271–291 (IIFCSTHKSLTLGIPMLKIVF). The Extracellular portion of the chain corresponds to 292 to 298 (AGHEHLS). Residues 299–319 (LISLPLLIYHPAQILLGSVLV) form a helical membrane-spanning segment. Residues 320–340 (PTIKSWMVSRQKGVKLTRPTV) are Cytoplasmic-facing.

The protein belongs to the bile acid:sodium symporter (BASS) (TC 2.A.28) family. In terms of tissue distribution, strongly expressed in liver, adrenal gland, small intestine and colon. Moderately expressed in heart, lung, kidney and spleen. Weakly expressed in brain.

The protein localises to the cell membrane. It localises to the endoplasmic reticulum membrane. The protein resides in the golgi apparatus membrane. Its function is as follows. Involved in teeth and skeletal development. Has an essential role in the biosynthesis and trafficking of glycosaminoglycans and glycoproteins to produce a proper functioning extracellular matrix. Required for extracellular matrix mineralization. Also involved in the regulation of cellular calcium homeostasis. Does not show transport activity towards bile acids or steroid sulfates (including taurocholate, cholate, chenodeoxycholate, estrone-3-sulfate, dehydroepiandrosterone sulfate (DHEAS) and pregnenolone sulfate). This is Sodium/bile acid cotransporter 7 (Slc10a7) from Rattus norvegicus (Rat).